Reading from the N-terminus, the 196-residue chain is Protein GrpE (196 aa).

Positions 1 to 26 are enriched in basic and acidic residues; it reads MQEPHNQEPIEEQKLSEMEDTLEKQH. The segment at 1–40 is disordered; that stretch reads MQEPHNQEPIEEQKLSEMEDTLEKQHSGASTENTERAEEG.

It belongs to the GrpE family. As to quaternary structure, homodimer.

It localises to the cytoplasm. Participates actively in the response to hyperosmotic and heat shock by preventing the aggregation of stress-denatured proteins, in association with DnaK and GrpE. It is the nucleotide exchange factor for DnaK and may function as a thermosensor. Unfolded proteins bind initially to DnaJ; upon interaction with the DnaJ-bound protein, DnaK hydrolyzes its bound ATP, resulting in the formation of a stable complex. GrpE releases ADP from DnaK; ATP binding to DnaK triggers the release of the substrate protein, thus completing the reaction cycle. Several rounds of ATP-dependent interactions between DnaJ, DnaK and GrpE are required for fully efficient folding. The sequence is that of Protein GrpE from Nitrosomonas eutropha (strain DSM 101675 / C91 / Nm57).